Here is a 1212-residue protein sequence, read N- to C-terminus: Peregrin (1212 aa).

The segment at 21–47 adopts a C2H2-type zinc-finger fold; that stretch reads YECPVETCRKVYKSYSGIEYHLYHYDH. Disordered regions lie at residues 43-87 and 118-176; these read YHYD…SPGR and VVSE…PKLP. The segment covering 58–67 has biased composition (basic residues); sequence LRKHKKKGRQ. The tract at residues 59–221 is interaction with KAT6A and KAT6B; it reads RKHKKKGRQS…VEYDMDEEDY (163 aa). Positions 74–85 are enriched in low complexity; it reads QSPSPSEVSQSP. The span at 119–130 shows a compositional bias: acidic residues; it reads VSEDEEAPEEAP. At Ser120 the chain carries Phosphoserine. At Lys147 the chain carries N6-acetyllysine. Basic residues predominate over residues 148–166; it reads SGKHKNKEKRKDSNHHHHS. Ser237 is modified (phosphoserine). The segment at 272–322 adopts a PHD-type 1 zinc-finger fold; it reads DAVCCICNDGECQNSNVILFCDMCNLAVHQECYGVPYIPEGQWLCRRCLQS. Residues 326–359 form a C2HC pre-PHD-type zinc finger; it reads AVDCALCPNKGGAFKQTDDGRWAHVVCALWIPEV. The PHD-type 2 zinc finger occupies 383 to 447; sequence LTCYICKQRG…RKTAYCDIHT (65 aa). A disordered region spans residues 447–489; it reads TPPGSARRLPALSHSEGEEEEDEEEDEGKSWSSEKVKKAKAKS. Ser459 and Ser461 each carry phosphoserine. Positions 463–473 are enriched in acidic residues; the sequence is GEEEEDEEEDE. Positions 500–819 are interaction with MEAF6 and ING5; that stretch reads LAEKRAAAPV…IKKEMTALRR (320 aa). Residues 542–1077 form a required for RUNX1 and RUNX2 transcriptional activation region; it reads YWTLKRQSRN…RGAGWLSEDE (536 aa). Lys579 carries the N6-acetyllysine modification. Residues 627 to 731 enclose the Bromo domain; that stretch reads MQLTPFLILL…EQGGAVLRQA (105 aa). Residues 817–1060 are disordered; it reads LRRKLAHQRE…VGTGRGVGHS (244 aa). Over residues 823 to 836 the composition is skewed to basic and acidic residues; sequence HQRETGRDGPERHG. Thr856 carries the phosphothreonine modification. The span at 856 to 869 shows a compositional bias: low complexity; that stretch reads TDSAAEESSSQETS. A phosphoserine mark is found at Ser858, Ser915, Ser920, and Ser924. Residues 993–1019 show a composition bias toward low complexity; sequence PRSSSDSESSSSSSSSAASDRTSTTPS. A Phosphoserine modification is found at Ser1074. In terms of domain architecture, PWWP spans 1083–1166; it reads ALDLVWAKCR…RTKLVPLGVN (84 aa). Ser1185 is modified (phosphoserine).

As to quaternary structure, component of some HBO1 complex composed of KAT7/HBO1, MEAF6, ING5, and BRPF1. Component of the MOZ/MORF complex composed at least of ING5, KAT6A, KAT6B, MEAF6 and one of BRPF1, BRD1/BRPF2 and BRPF3. Interacts (via PHD-type zinc finger domains) with unmethylated histone H3 at 'Lys-4' (H3K4me0). Interacts with trimethylated 'Lys-36' of histone H3 (H3K36me3). Interacts with ING5; interaction directs BRPF1 to H4K4me3-enriched chromatin at the 5' of active genes. Interacts with KAT7. Acetylated by KAT6A. In terms of tissue distribution, expressed at low level in most tissues, with high expression in the testis and specific regions of the brain.

The protein resides in the nucleus. It is found in the chromosome. It localises to the cytoplasm. Its function is as follows. Scaffold subunit of various histone acetyltransferase (HAT) complexes, such as the MOZ/MORF and HBO1 complexes, which have a histone H3 acetyltransferase activity. Plays a key role in HBO1 complex by directing KAT7/HBO1 specificity towards histone H3 'Lys-14' acetylation (H3K14ac). Some HAT complexes preferentially mediate histone H3 'Lys-23' (H3K23ac) acetylation. Positively regulates the transcription of RUNX1 and RUNX2. The chain is Peregrin from Mus musculus (Mouse).